The chain runs to 116 residues: Large ribosomal subunit protein uL18 (116 aa).

It belongs to the universal ribosomal protein uL18 family. As to quaternary structure, part of the 50S ribosomal subunit; part of the 5S rRNA/L5/L18/L25 subcomplex. Contacts the 5S and 23S rRNAs.

Its function is as follows. This is one of the proteins that bind and probably mediate the attachment of the 5S RNA into the large ribosomal subunit, where it forms part of the central protuberance. The sequence is that of Large ribosomal subunit protein uL18 from Azotobacter vinelandii (strain DJ / ATCC BAA-1303).